The following is a 733-amino-acid chain: Hexamerin (733 aa).

Residues Met-1–Ala-17 form the signal peptide. N-linked (GlcNAc...) asparagine glycosylation is found at Asn-199, Asn-234, and Asn-431.

This sequence belongs to the hemocyanin family. As to quaternary structure, homohexamer.

It localises to the secreted. The protein resides in the extracellular space. Functionally, larval storage protein (LSP) which may serve as a store of amino acids for synthesis of adult proteins. In Blaberus discoidalis (Tropical cockroach), this protein is Hexamerin.